Consider the following 89-residue polypeptide: Small ribosomal subunit protein uS15 (89 aa).

It belongs to the universal ribosomal protein uS15 family. Part of the 30S ribosomal subunit. Forms a bridge to the 50S subunit in the 70S ribosome, contacting the 23S rRNA.

One of the primary rRNA binding proteins, it binds directly to 16S rRNA where it helps nucleate assembly of the platform of the 30S subunit by binding and bridging several RNA helices of the 16S rRNA. Functionally, forms an intersubunit bridge (bridge B4) with the 23S rRNA of the 50S subunit in the ribosome. The chain is Small ribosomal subunit protein uS15 from Shewanella halifaxensis (strain HAW-EB4).